A 135-amino-acid chain; its full sequence is Methylglyoxal synthase (135 aa).

The MGS-like domain maps to 1-135; the sequence is MQKTLALVAH…GLYERAVPEF (135 aa). Residues H10, K14, 36-39, and 56-57 each bind substrate; these read TGTT and SG. Catalysis depends on D62, which acts as the Proton donor/acceptor. Residue H89 coordinates substrate.

The protein belongs to the methylglyoxal synthase family.

It catalyses the reaction dihydroxyacetone phosphate = methylglyoxal + phosphate. Its function is as follows. Catalyzes the formation of methylglyoxal from dihydroxyacetone phosphate. The sequence is that of Methylglyoxal synthase from Pseudoalteromonas atlantica (strain T6c / ATCC BAA-1087).